The primary structure comprises 211 residues: Thymidylate kinase (211 aa).

ATP is bound at residue 10 to 17 (GPDGAGKT).

It belongs to the thymidylate kinase family.

It catalyses the reaction dTMP + ATP = dTDP + ADP. Phosphorylation of dTMP to form dTDP in both de novo and salvage pathways of dTTP synthesis. The polypeptide is Thymidylate kinase (Lactococcus lactis subsp. cremoris (strain MG1363)).